The following is a 202-amino-acid chain: NADH:(hydroxy)cinnamate reductase subunit CrdA (202 aa).

It belongs to the NADH-dependent flavin reductase family. As to quaternary structure, NADH:(hydroxy)cinnamate reductase Crd is a heterodimer composed of CrdA and CrdB subunits, encoded by adjacent genes. FMN serves as cofactor.

In terms of biological role, component of the NADH:(hydroxy)cinnamate reductase. CrdA is probably reduced by NADH and then transfers the electrons to the catalytic center of CrdB. Is likely involved in protecting V.ruber from (hydroxy)cinnamate poisoning. This Vibrio ruber (strain DSM 16370 / JCM 11486 / BCRC 17186 / CECT 7878 / LMG 23124 / VR1) protein is NADH:(hydroxy)cinnamate reductase subunit CrdA.